Reading from the N-terminus, the 95-residue chain is Large ribosomal subunit protein bL25 (95 aa).

Belongs to the bacterial ribosomal protein bL25 family. Part of the 50S ribosomal subunit; part of the 5S rRNA/L5/L18/L25 subcomplex. Contacts the 5S rRNA. Binds to the 5S rRNA independently of L5 and L18.

In terms of biological role, this is one of the proteins that binds to the 5S RNA in the ribosome where it forms part of the central protuberance. The polypeptide is Large ribosomal subunit protein bL25 (Shewanella halifaxensis (strain HAW-EB4)).